The sequence spans 510 residues: Secreted RxLR effector protein 24 (510 aa).

An N-terminal signal peptide occupies residues 1-18 (MRGAFYVAIALLGSHTAA). A RxLR-dEER motif is present at residues 47-68 (RVLRERRDSKDKLTVHAGAEER).

The protein belongs to the RxLR effector family.

The protein localises to the secreted. The protein resides in the host nucleus. Its function is as follows. Secreted effector that acts as an elicitor that induces cell death in host plant cells. In Plasmopara viticola (Downy mildew of grapevine), this protein is Secreted RxLR effector protein 24.